Reading from the N-terminus, the 355-residue chain is 3-dehydroquinate synthase (355 aa).

Residues Asp67 to Lys72, Gly101 to Asp105, Thr125 to Thr126, Lys138, Lys147, and Phe165 to Thr168 each bind NAD(+). Glu180, His243, and His260 together coordinate Zn(2+).

This sequence belongs to the sugar phosphate cyclases superfamily. Dehydroquinate synthase family. NAD(+) serves as cofactor. The cofactor is Co(2+). Zn(2+) is required as a cofactor.

It is found in the cytoplasm. The catalysed reaction is 7-phospho-2-dehydro-3-deoxy-D-arabino-heptonate = 3-dehydroquinate + phosphate. It participates in metabolic intermediate biosynthesis; chorismate biosynthesis; chorismate from D-erythrose 4-phosphate and phosphoenolpyruvate: step 2/7. In terms of biological role, catalyzes the conversion of 3-deoxy-D-arabino-heptulosonate 7-phosphate (DAHP) to dehydroquinate (DHQ). The chain is 3-dehydroquinate synthase from Buchnera aphidicola subsp. Baizongia pistaciae (strain Bp).